Reading from the N-terminus, the 389-residue chain is S-adenosylmethionine synthase (389 aa).

Residue His-19 coordinates ATP. Residue Asp-21 participates in Mg(2+) binding. A K(+)-binding site is contributed by Glu-47. Positions 60 and 103 each coordinate L-methionine. The tract at residues 103 to 113 (QSVDIAQGVSR) is flexible loop. ATP contacts are provided by residues 168–170 (DGK), 234–235 (RF), Asp-243, 249–250 (RK), Ala-266, and Lys-270. Asp-243 is a binding site for L-methionine. Lys-274 is a binding site for L-methionine.

The protein belongs to the AdoMet synthase family. In terms of assembly, homotetramer; dimer of dimers. Mg(2+) serves as cofactor. It depends on K(+) as a cofactor.

The protein localises to the cytoplasm. The catalysed reaction is L-methionine + ATP + H2O = S-adenosyl-L-methionine + phosphate + diphosphate. Its pathway is amino-acid biosynthesis; S-adenosyl-L-methionine biosynthesis; S-adenosyl-L-methionine from L-methionine: step 1/1. Functionally, catalyzes the formation of S-adenosylmethionine (AdoMet) from methionine and ATP. The overall synthetic reaction is composed of two sequential steps, AdoMet formation and the subsequent tripolyphosphate hydrolysis which occurs prior to release of AdoMet from the enzyme. The sequence is that of S-adenosylmethionine synthase from Solidesulfovibrio magneticus (strain ATCC 700980 / DSM 13731 / RS-1) (Desulfovibrio magneticus).